Reading from the N-terminus, the 688-residue chain is Phosphatidylinositol 4-phosphate 5-kinase type-1 gamma (688 aa).

A disordered region spans residues 48 to 71 (GQPGPGHGKKLGHRGVDASGETTY). Positions 75 to 443 (TSSTLKGAIQ…RFFKFMSSTV (369 aa)) constitute a PIPK domain. 2 positions are modified to N6-acetyllysine: K265 and K268. Position 459 is an asymmetric dimethylarginine; alternate (R459). R459 bears the Omega-N-methylarginine; alternate mark. Over residues 525-534 (TTLSSTSLSI) the composition is skewed to low complexity. 2 disordered regions span residues 525-565 (TTLS…QEEL) and 592-629 (GAGV…EEDA). S554 carries the post-translational modification Phosphoserine. Residues 602-623 (ASAAATVEVDAASQASEPASQA) show a composition bias toward low complexity. Y635 bears the Phosphotyrosine; by EGFR mark. Position 671 is a phosphotyrosine; by CSK (Y671). S672 carries the phosphoserine; by CDK5, MAPK1 and CDK1 modification. 2 positions are modified to phosphoserine: S682 and S686. Position 688 is a phosphothreonine (T688).

As to quaternary structure, interacts with TLN1. Interacts with TLN2; interaction stimulates 1-phosphatidylinositol-4-phosphate 5-kinase activity. May compete with beta-integrins for the same binding site on TLN1 and TLN2. Interacts with ARF6; interaction stimulates 1-phosphatidylinositol-4-phosphate 5-kinase activity. Interacts with AP2B1. Interacts with AP2M1; phosphorylation of PIP5K1C by CSK disrupts the interaction; clathrin competes with PIP5K1C. Interacts with CDH1. Interacts with CSK. Interacts with PLCG1; interaction is abolished upon EGF stimulation. Interacts with LAPTM4B; promotes SNX5 association with LAPTM4B; kinase activity of PIP5K1C is required; interaction is regulated by phosphatidylinositol 4,5-bisphosphate generated by PIP5K1C. Post-translationally, phosphorylation on Ser-672 negatively regulates binding to TLN2 and is strongly stimulated in mitosis. Phosphorylation on Tyr-671 is necessary for targeting to focal adhesions. Phosphorylation on Ser-672 and Tyr-671 are mutually exclusive. Phosphorylated by SYK and CSK. Tyrosine phosphorylation is enhanced by PTK2 signaling. Phosphorylated at Tyr-635 upon EGF stimulation. Some studies suggest that phosphorylation on Tyr-671 enhances binding to tailins (TLN1 and TLN2); others that phosphorylation at Tyr-671 does not directly enhance binding to tailins (TLN1 and TLN2) but may act indirectly by inhibiting phosphorylation at Ser-672. Acetylation at Lys-265 and Lys-268 seems to decrease lipid kinase activity. Deacetylation of these sites by SIRT1 positively regulates the exocytosis of TSH-containing granules from pituitary cells.

The protein localises to the cell membrane. It is found in the endomembrane system. Its subcellular location is the cytoplasm. The protein resides in the cell junction. It localises to the focal adhesion. The protein localises to the adherens junction. It is found in the cell projection. Its subcellular location is the ruffle membrane. The protein resides in the phagocytic cup. It localises to the uropodium. It catalyses the reaction a 1,2-diacyl-sn-glycero-3-phospho-(1D-myo-inositol 4-phosphate) + ATP = a 1,2-diacyl-sn-glycero-3-phospho-(1D-myo-inositol-4,5-bisphosphate) + ADP + H(+). It carries out the reaction 1-octadecanoyl-2-(5Z,8Z,11Z,14Z)-eicosatetraenoyl-sn-glycero-3-phospho-1D-myo-inositol 4-phosphate + ATP = 1-octadecanoyl-2-(5Z,8Z,11Z,14Z)-eicosatetraenoyl-sn-glycero-3-phospho-1D-myo-inositol 4,5-bisphosphate + ADP + H(+). The catalysed reaction is 1-octadecanoyl-2-(9Z)-octadecenoyl-sn-glycero-3-phospho-1D-myo-inositol 4-phosphate + ATP = 1-octadecanoyl-2-(9Z)-octadecenoyl-sn-glycero-3-phospho-1D-myo-inositol 4,5-bisphosphate + ADP + H(+). The enzyme catalyses 1-octadecanoyl-2-(9Z)-octadecenoyl-sn-glycero-3-phospho-1D-myo-inositol + ATP = 1-octadecanoyl-2-(9Z)-octadecenoyl-sn-glycero-3-phospho-1D-myo-inositol 5-phosphate + ADP + H(+). It catalyses the reaction 1-octadecanoyl-2-(9Z,12Z)-octadecadienoyl-sn-glycero-3-phospho-1D-myo-inositol + ATP = 1-octadecanoyl-2-(9Z,12Z)-octadecadienoyl-sn-glycero-3-phospho-1D-myo-inositol 5-phosphate + ADP + H(+). It carries out the reaction 1-octadecanoyl-2-(5Z,8Z,11Z,14Z-eicosatetraenoyl)-sn-glycero-3-phospho-(1D-myo-inositol) + ATP = 1-octadecanoyl-2-(5Z,8Z,11Z,14Z)-eicosatetraenoyl-sn-glycero-3-phospho-1D-myo-inositol 5-phosphate + ADP + H(+). The catalysed reaction is 1,2-di-(9Z,12Z)-octadecadienoyl-sn-glycero-3-phospho-1D-myo-inositol + ATP = 1,2-di(9Z,12Z)-octadecadienoyl-sn-glycero-3-phospho-1D-myo-inositol 5-phosphate + ADP + H(+). Functionally, catalyzes the phosphorylation of phosphatidylinositol 4-phosphate (PtdIns(4)P/PI4P) to form phosphatidylinositol 4,5-bisphosphate (PtdIns(4,5)P2/PIP2), a lipid second messenger that regulates several cellular processes such as signal transduction, vesicle trafficking, actin cytoskeleton dynamics, cell adhesion, and cell motility. PtdIns(4,5)P2 can directly act as a second messenger or can be utilized as a precursor to generate other second messengers: inositol 1,4,5-trisphosphate (IP3), diacylglycerol (DAG) or phosphatidylinositol-3,4,5-trisphosphate (PtdIns(3,4,5)P3/PIP3). PIP5K1A-mediated phosphorylation of PtdIns(4)P is the predominant pathway for PtdIns(4,5)P2 synthesis. Together with PIP5K1A, is required for phagocytosis, both enzymes regulating different types of actin remodeling at sequential steps. Promotes particle attachment by generating the pool of PtdIns(4,5)P2 that induces controlled actin depolymerization to facilitate Fc-gamma-R clustering. Mediates RAC1-dependent reorganization of actin filaments. Required for synaptic vesicle transport. Controls the plasma membrane pool of PtdIns(4,5)P2 implicated in synaptic vesicle endocytosis and exocytosis. Plays a role in endocytosis mediated by clathrin and AP-2 (adaptor protein complex 2). Required for clathrin-coated pits assembly at the synapse. Participates in cell junction assembly. Modulates adherens junctions formation by facilitating CDH1/cadherin trafficking. Required for focal adhesion dynamics. Modulates the targeting of talins (TLN1 and TLN2) to the plasma membrane and their efficient assembly into focal adhesions. Regulates the interaction between talins (TLN1 and TLN2) and beta-integrins. Required for uropodium formation and retraction of the cell rear during directed migration. Has a role in growth factor-stimulated directional cell migration and adhesion. Required for talin assembly into nascent adhesions forming at the leading edge toward the direction of the growth factor. Negative regulator of T-cell activation and adhesion. Negatively regulates integrin alpha-L/beta-2 (LFA-1) polarization and adhesion induced by T-cell receptor. Together with PIP5K1A has a role during embryogenesis and together with PIP5K1B may have a role immediately after birth. The polypeptide is Phosphatidylinositol 4-phosphate 5-kinase type-1 gamma (Rattus norvegicus (Rat)).